The sequence spans 1045 residues: Bifunctional glutamine synthetase adenylyltransferase/adenylyl-removing enzyme (1045 aa).

An adenylyl removase region spans residues Met1 to Leu527. Residues Asn533–Phe1045 are adenylyl transferase.

It belongs to the GlnE family. It depends on Mg(2+) as a cofactor.

The enzyme catalyses [glutamine synthetase]-O(4)-(5'-adenylyl)-L-tyrosine + phosphate = [glutamine synthetase]-L-tyrosine + ADP. It carries out the reaction [glutamine synthetase]-L-tyrosine + ATP = [glutamine synthetase]-O(4)-(5'-adenylyl)-L-tyrosine + diphosphate. Involved in the regulation of glutamine synthetase GlnA, a key enzyme in the process to assimilate ammonia. When cellular nitrogen levels are high, the C-terminal adenylyl transferase (AT) inactivates GlnA by covalent transfer of an adenylyl group from ATP to specific tyrosine residue of GlnA, thus reducing its activity. Conversely, when nitrogen levels are low, the N-terminal adenylyl removase (AR) activates GlnA by removing the adenylyl group by phosphorolysis, increasing its activity. The regulatory region of GlnE binds the signal transduction protein PII (GlnB) which indicates the nitrogen status of the cell. In Corynebacterium glutamicum (strain ATCC 13032 / DSM 20300 / JCM 1318 / BCRC 11384 / CCUG 27702 / LMG 3730 / NBRC 12168 / NCIMB 10025 / NRRL B-2784 / 534), this protein is Bifunctional glutamine synthetase adenylyltransferase/adenylyl-removing enzyme.